A 195-amino-acid chain; its full sequence is Large ribosomal subunit protein eL6 (195 aa).

2 positions are modified to phosphoserine: S105 and S115.

It belongs to the eukaryotic ribosomal protein eL6 family. Component of the large ribosomal subunit (LSU). Mature yeast ribosomes consist of a small (40S) and a large (60S) subunit. The 40S small subunit contains 1 molecule of ribosomal RNA (18S rRNA) and at least 33 different proteins. The large 60S subunit contains 3 rRNA molecules (25S, 5.8S and 5S rRNA) and at least 46 different proteins.

Its subcellular location is the cytoplasm. It localises to the nucleus. It is found in the nucleolus. Component of the ribosome, a large ribonucleoprotein complex responsible for the synthesis of proteins in the cell. The small ribosomal subunit (SSU) binds messenger RNAs (mRNAs) and translates the encoded message by selecting cognate aminoacyl-transfer RNA (tRNA) molecules. The large subunit (LSU) contains the ribosomal catalytic site termed the peptidyl transferase center (PTC), which catalyzes the formation of peptide bonds, thereby polymerizing the amino acids delivered by tRNAs into a polypeptide chain. The nascent polypeptides leave the ribosome through a tunnel in the LSU and interact with protein factors that function in enzymatic processing, targeting, and the membrane insertion of nascent chains at the exit of the ribosomal tunnel. The chain is Large ribosomal subunit protein eL6 (rpl6) from Schizosaccharomyces pombe (strain 972 / ATCC 24843) (Fission yeast).